A 295-amino-acid polypeptide reads, in one-letter code: Sulfotransferase 1 family member D1 (295 aa).

48–53 (KSGTTW) is a binding site for 3'-phosphoadenylyl sulfate. Substrate is bound by residues F81 and 106-108 (KTH). Residue H108 is the Proton acceptor of the active site. 3'-phosphoadenylyl sulfate is bound by residues R130 and S138. F142 provides a ligand contact to substrate. 3'-phosphoadenylyl sulfate-binding positions include Y193, S227, and 257–259 (RKG).

This sequence belongs to the sulfotransferase 1 family.

The protein resides in the cytoplasm. Sulfotransferase with broad substrate specificity that utilizes 3'-phospho-5'-adenylyl sulfate (PAPS) as sulfonate donor to catalyze the sulfate conjugation of catecholamines, such as dopamine, prostaglandins, leukotriene E4, drugs and xenobiotic compounds. Has sulfotransferase activity towards p-nitrophenol, 2-naphthylamine and minoxidil (in vitro). Sulfonation increases the water solubility of most compounds, and therefore their renal excretion, but it can also result in bioactivation to form active metabolites. The sequence is that of Sulfotransferase 1 family member D1 (Sult1d1) from Rattus norvegicus (Rat).